A 171-amino-acid polypeptide reads, in one-letter code: uncharacterized protein (171 aa).

This sequence belongs to the mimivirus L87/L94 family.

This is an uncharacterized protein from Acanthamoeba polyphaga (Amoeba).